The chain runs to 380 residues: Lipid-A-disaccharide synthase (380 aa).

It belongs to the LpxB family.

The catalysed reaction is a lipid X + a UDP-2-N,3-O-bis[(3R)-3-hydroxyacyl]-alpha-D-glucosamine = a lipid A disaccharide + UDP + H(+). The protein operates within bacterial outer membrane biogenesis; LPS lipid A biosynthesis. In terms of biological role, condensation of UDP-2,3-diacylglucosamine and 2,3-diacylglucosamine-1-phosphate to form lipid A disaccharide, a precursor of lipid A, a phosphorylated glycolipid that anchors the lipopolysaccharide to the outer membrane of the cell. In Francisella tularensis subsp. novicida (strain U112), this protein is Lipid-A-disaccharide synthase.